We begin with the raw amino-acid sequence, 361 residues long: Cytochrome P450 family protein EryCII (361 aa).

It belongs to the cytochrome P450 family. In terms of assembly, heterotetramer composed of EryCII and EryCIII.

Its pathway is antibiotic biosynthesis; erythromycin biosynthesis. Involved in the erythromycin biosynthesis pathway. Acts by forming a complex and stabilizing the desosaminyl transferase EryCIII. This Saccharopolyspora erythraea (strain ATCC 11635 / DSM 40517 / JCM 4748 / NBRC 13426 / NCIMB 8594 / NRRL 2338) protein is Cytochrome P450 family protein EryCII (eryCII).